The primary structure comprises 1217 residues: MTIPEKPQGVIWTDAQWQSIYATGQDVLVAAAAGSGKTAVLVERIIQKILRDGIDVDRLLVVTFTNLSAREMKHRVDQRIQEASIADPANAHLKNQRIKIHQAQISTLHSFCLKLIQQHYDVLNIDPNFRTSSEAENILLLEQTIDEVIEQHYDILDPAFIELTEQLSSDRSDDQFRMIIKQLYFFSVANPNPTNWLDQLVTPYEEEAQQAQLIQLLTDLSKVFITAAYDALNKAYDLFSMMDSVDKHLAVIEDERRLMGRVLEGGFIDIPYLTGHEFGARLPNVTAKIKEANEMMVDALEDAKLQYKKYKSLIDKVKSDYFSREADDLKADMQQLAPRVKYLARIVKDVMSEFNRKKRSKNILDFSDYEHFALQILTNEDGSPSEIAESYRQHFQEILVDEYQDTNRVQEKILSCIKTGDEHNGNLFMVGDVKQSIYKFRQADPSLFIEKYQRFTIDGDGTGRRIDLSQNFRSRKEVLSTTNYIFKHMMDEQVGEVKYDEAAQLYYGAPYDESDHPVNLKVLVEADQEHSDLTGSEQEAHFIVEQVKDILEHQKVYDMKTGSYRSATYKDIVILERSFGQARNLQQAFKNEDIPFHVNSREGYFEQTEVRLVLSFLRAIDNPLQDIYLVGLMRSVIYQFKEDELAQIRILSPNDDYFYQSIVNYINDEAADAILVDKLKMFLSDIQSYQQYSKDHPVYQLIDKFYNDHYVIQYFSGLIGGRGRRANLYGLFNKAIEFENSSFRGLYQFIRFIDELIERGKDFGEENVVGPNDNVVRMMTIHSSKGLEFPFVIYSGLSKDFNKRDLKQPVILNQQFGLGMDYFDVDKEMAFPSLASVAYRAVAEKELVSEEMRLVYVALTRAKEQLYLIGRVKNDKSLLELEQLSISGEHIAVNERLTSPNPFHLIYSILSKHQSASIPDDLKFEKDIAQIEDSSRPNVNISIVYFEDVSTETILDNDEYRSVNQLETMQNGNEDVKAQIKHQLDYRYPYVNDTKKPSKQSVSELKRQYETEESGTSYERVRQYRIGFSTYERPKFLSEQGKRKANEIGTLMHTVMQHLPFKKERISEVELHQYIDGLIDKHIIEADAKKDIRMDEIMTFINSELYSIIAEAEQVYRELPFVVNQALVDQLPQGDEDVSIIQGMIDLIFVKDGVHYFVDYKTDAFNRRRGMTDEEIGTQLKNKYKIQMKYYQNTLQTILNKEVKGYLYFFKFGTLQL.

The region spanning 10–475 is the UvrD-like helicase ATP-binding domain; the sequence is VIWTDAQWQS…IDLSQNFRSR (466 aa). Position 31 to 38 (31 to 38) interacts with ATP; it reads AAAGSGKT. The region spanning 476-786 is the UvrD-like helicase C-terminal domain; sequence KEVLSTTNYI…RMMTIHSSKG (311 aa).

It belongs to the helicase family. AddA subfamily. In terms of assembly, heterodimer of AddA and AddB/RexB. The cofactor is Mg(2+).

The catalysed reaction is Couples ATP hydrolysis with the unwinding of duplex DNA by translocating in the 3'-5' direction.. It carries out the reaction ATP + H2O = ADP + phosphate + H(+). In terms of biological role, the heterodimer acts as both an ATP-dependent DNA helicase and an ATP-dependent, dual-direction single-stranded exonuclease. Recognizes the chi site generating a DNA molecule suitable for the initiation of homologous recombination. The AddA nuclease domain is required for chi fragment generation; this subunit has the helicase and 3' -&gt; 5' nuclease activities. The protein is ATP-dependent helicase/nuclease subunit A of Staphylococcus aureus (strain NCTC 8325 / PS 47).